The following is a 452-amino-acid chain: Protein EARLY-RESPONSIVE TO DEHYDRATION 7, chloroplastic (452 aa).

The segment covering 1–18 (MESSGDKQTSSLYPTVDT) has biased composition (polar residues). A chloroplast-targeting transit peptide spans 1-28 (MESSGDKQTSSLYPTVDTSNPEAPINPS). The tract at residues 1–37 (MESSGDKQTSSLYPTVDTSNPEAPINPSSSSSTNNLY) is disordered. Low complexity predominate over residues 19–37 (SNPEAPINPSSSSSTNNLY). One can recognise a Senescence domain in the interval 258-426 (IATGSGHLIK…AWVAFKIRKA (169 aa)).

It localises to the plastid. It is found in the chloroplast. This chain is Protein EARLY-RESPONSIVE TO DEHYDRATION 7, chloroplastic, found in Arabidopsis thaliana (Mouse-ear cress).